Here is a 559-residue protein sequence, read N- to C-terminus: Urocanate hydratase (559 aa).

NAD(+)-binding positions include 54–55 (GG), Gln132, 178–180 (GMG), Glu198, Arg203, 244–245 (NA), 265–269 (QTSAH), 275–276 (YL), and Tyr324. Residue Cys412 is part of the active site. Gly494 serves as a coordination point for NAD(+).

It belongs to the urocanase family. NAD(+) serves as cofactor.

It is found in the cytoplasm. It catalyses the reaction 4-imidazolone-5-propanoate = trans-urocanate + H2O. It functions in the pathway amino-acid degradation; L-histidine degradation into L-glutamate; N-formimidoyl-L-glutamate from L-histidine: step 2/3. Its function is as follows. Catalyzes the conversion of urocanate to 4-imidazolone-5-propionate. In Azotobacter vinelandii (strain DJ / ATCC BAA-1303), this protein is Urocanate hydratase.